A 160-amino-acid chain; its full sequence is uncharacterized protein (160 aa).

The N-acetyltransferase domain occupies 7–151; sequence LLINFKTLEE…NPYIWHPDMD (145 aa).

This is an uncharacterized protein from Bacillus velezensis (strain DSM 23117 / BGSC 10A6 / LMG 26770 / FZB42) (Bacillus amyloliquefaciens subsp. plantarum).